A 101-amino-acid polypeptide reads, in one-letter code: Urease subunit beta (101 aa).

Belongs to the urease beta subunit family. Heterotrimer of UreA (gamma), UreB (beta) and UreC (alpha) subunits. Three heterotrimers associate to form the active enzyme.

The protein localises to the cytoplasm. The catalysed reaction is urea + 2 H2O + H(+) = hydrogencarbonate + 2 NH4(+). It participates in nitrogen metabolism; urea degradation; CO(2) and NH(3) from urea (urease route): step 1/1. The chain is Urease subunit beta from Granulibacter bethesdensis (strain ATCC BAA-1260 / CGDNIH1).